The sequence spans 128 residues: Sirohydrochlorin cobaltochelatase (128 aa).

His9 functions as the Proton acceptor in the catalytic mechanism. His9 is a binding site for Co(2+). Substrate is bound by residues Lys43 and Phe68–His73. Residue His73 coordinates Co(2+).

The protein belongs to the CbiX family. CbiXS subfamily. As to quaternary structure, homotetramer; dimer of dimers.

It catalyses the reaction Co-sirohydrochlorin + 2 H(+) = sirohydrochlorin + Co(2+). It participates in cofactor biosynthesis; adenosylcobalamin biosynthesis; cob(II)yrinate a,c-diamide from sirohydrochlorin (anaerobic route): step 1/10. Catalyzes the insertion of Co(2+) into sirohydrochlorin as part of the anaerobic pathway to cobalamin biosynthesis. This Saccharolobus islandicus (strain Y.N.15.51 / Yellowstone #2) (Sulfolobus islandicus) protein is Sirohydrochlorin cobaltochelatase.